A 241-amino-acid polypeptide reads, in one-letter code: NLP effector protein 7 (241 aa).

A signal peptide spans 1 to 19 (MHLCALLIAAAGVLASVRA). Residues 105–115 (AIMYAWYFPKA) carry the Conserved undecapeptide motif motif. A Conserved heptapeptide motif motif is present at residues 125–131 (GSRHYWL). A glycan (N-linked (GlcNAc...) asparagine) is linked at N144.

It belongs to the Necrosis inducing protein (NPP1) family.

The protein resides in the secreted. Secreted effector that acts as a pathogen-associated molecular pattern (PAMP) recognized by the plant immune system. Induces necrosis in Nicotiana benthamiana leaves and can induce Phytophthora capsici resistance in Nicotiana benthamiana. Also significantly improves disease resistance of Arabidopsis thaliana to Hyaloperonospora arabidopsidis. causes an inhibition of plant growth which is typically associated with enhanced immunity when over-expressed in Arabidopsis. The protein is NLP effector protein 7 of Plasmopara viticola (Downy mildew of grapevine).